The sequence spans 508 residues: Serine carboxypeptidase 3 (508 aa).

The first 19 residues, M1–A19, serve as a signal peptide directing secretion. Residues A20–T80 constitute a propeptide that is removed on maturation. Residues P48–E67 form a disordered region. At L81 the chain carries Blocked amino end (Leu). 3 disulfides stabilise this stretch: C133/C373, C301/C316, and C339/C344. An N-linked (GlcNAc...) asparagine glycan is attached at N151. Residue S223 is part of the active site. D411 is a catalytic residue. Substrate is bound at residue C414. H468 is a catalytic residue. Residues E492–M508 constitute a propeptide that is removed on maturation.

This sequence belongs to the peptidase S10 family. Monomer.

Its subcellular location is the secreted. It carries out the reaction Release of a C-terminal amino acid with broad specificity.. With respect to regulation, inhibited by mercuric ions. The polypeptide is Serine carboxypeptidase 3 (CBP3) (Hordeum vulgare (Barley)).